Reading from the N-terminus, the 332-residue chain is Probable L-asparaginase (332 aa).

Residues 6 to 332 form the Asparaginase/glutaminase domain; that stretch reads PTIALLATGG…AKIQEMFEEY (327 aa). T16 acts as the O-isoaspartyl threonine intermediate in catalysis. Substrate is bound by residues S62 and 95-96; that span reads TD.

This sequence belongs to the asparaginase 1 family.

It is found in the cytoplasm. The enzyme catalyses L-asparagine + H2O = L-aspartate + NH4(+). This chain is Probable L-asparaginase (ansA), found in Helicobacter pylori (strain J99 / ATCC 700824) (Campylobacter pylori J99).